A 240-amino-acid polypeptide reads, in one-letter code: Protein unc-119 homolog A (240 aa).

Positions 1–12 are enriched in gly residues; sequence MKVKKGGGGAGT. The segment at 1–61 is disordered; it reads MKVKKGGGGA…GPLQRKQRIG (61 aa). A compositionally biased stretch (low complexity) spans 13–23; that stretch reads GAEPASGAPGP. Residues Ser-37, Ser-39, and Ser-41 each carry the phosphoserine; by CK2 modification. Tetradecanoate is bound at residue Tyr-131.

This sequence belongs to the PDE6D/unc-119 family. In terms of assembly, interacts with CABP4; in the absence of calcium. May interact with GTP-bound ARL1. Interacts with ARL2 and ARL3 (GTP-bound forms); this promotes the release of myristoylated cargo proteins. Found in a complex with ARL3, RP2 and UNC119; RP2 induces hydrolysis of GTP ARL3 in the complex, leading to the release of UNC119. Interacts with NPHP3 (when myristoylated). Interacts with CYS1 (when myristoylated). Interacts with MACIR; interaction only takes place when UNC119 is not liganded with myristoylated proteins. Interacts with LCK; this interaction plays a crucial role in activation of LCK. Interacts with FYN. Interacts with RAB11A; in a cell cycle-dependent manner. Interacts with LYN (via SH2 and SH3 domains); leading to LYN activation. Interacts with DNM1; leading to a decrease of DNM1 GTPase activity. Found in a complex with ABL1, ABL2, CRK and UNC119; leading to the inhibition of CRK phosphorylation by ABL kinases. Interacts with CD44. Interacts with KLHL18 (via kelch repeats). Interacts with PPP3CA, PPP3CB and PPP3CC. Interacts with USP48; this interaction promotes UNC119 stability. In terms of processing, phosphorylation suppresses its interaction with KLHL18 and down-regulates its KLHL18-mediated degradation. Phosphorylated more under light conditions than dark conditions. Dephosphorylated by calcineurin.

Its subcellular location is the cytoplasm. The protein resides in the cytoskeleton. It localises to the microtubule organizing center. It is found in the centrosome. The protein localises to the spindle. Its subcellular location is the spindle pole. Its function is as follows. Involved in synaptic functions in photoreceptor cells, the signal transduction in immune cells as a Src family kinase activator, endosome recycling, the uptake of bacteria and endocytosis, protein trafficking in sensory neurons and as lipid-binding chaperone with specificity for a diverse subset of myristoylated proteins. Specifically binds the myristoyl moiety of a subset of N-terminally myristoylated proteins and is required for their localization. Binds myristoylated GNAT1 and is required for G-protein localization and trafficking in sensory neurons. Probably plays a role in trafficking proteins in photoreceptor cells. Plays important roles in mediating Src family kinase signals for the completion of cytokinesis via RAB11A. The protein is Protein unc-119 homolog A (UNC119) of Canis lupus familiaris (Dog).